A 289-amino-acid chain; its full sequence is Tachykinins (289 aa).

Residues 1-24 (MRSQGGSFAVALLLLLLLTAAATA) form the signal peptide. A propeptide spanning residues 25 to 49 (ADAEPDVESSVSTLPPGADAPRRMV) is cleaved from the precursor. The disordered stretch occupies residues 28-80 (EPDVESSVSTLPPGADAPRRMVKRAPTSSFIGMRGKKEDEKDQRAADWMGPDP). An Arginine amide modification is found at Arg-61. Over residues 62-72 (GKKEDEKDQRA) the composition is skewed to basic and acidic residues. The residue at position 95 (Asn-95) is an Asparagine amide. Arg-110 is modified (arginine amide). Val-155 carries the valine amide modification. The segment at 156-175 (GKRAPTGFTGMRGKRPMSGD) is disordered. 4 positions are modified to arginine amide: Arg-167, Arg-198, Arg-237, and Arg-281. The propeptide occupies 285–289 (PALAE).

Belongs to the tachykinin family.

The protein resides in the secreted. Its function is as follows. Tachykinins are active peptides which excite neurons, evoke behavioral responses, are potent vasodilators and secretagogues, and contract (directly or indirectly) many smooth muscles. Stimulates gut muscle contractions. The chain is Tachykinins from Drosophila pseudoobscura pseudoobscura (Fruit fly).